A 285-amino-acid chain; its full sequence is MTEFTTLLQQGSAWFFIPSAILLGALHGLEPGHSKTMMAAFIIAIKGTIKQAVMLGLAATISHTAVVWLIAFGGMVISKRFTAQSAEPWLQLISAVIIISTAFWMFWRTWRGERNWLENMHEHEHDHEHHHHDHEHHQDHDHDHDHEHHHHHEHGDNEEYQDAHARAHANDIKRHFDGREVTNWQILLFGLTGGLIPCPAAITVLLICIQLKALTLGATLVVSFSIGLALTLVTVGVGAAISVQQVAKRWSGFNTLAKRAPYFSSLLIGLVGVYMGVHGFMGIMR.

Topologically, residues 1 to 10 (MTEFTTLLQQ) are periplasmic. A helical transmembrane segment spans residues 11–31 (GSAWFFIPSAILLGALHGLEP). The Cytoplasmic portion of the chain corresponds to 32–56 (GHSKTMMAAFIIAIKGTIKQAVMLG). A helical transmembrane segment spans residues 57 to 77 (LAATISHTAVVWLIAFGGMVI). Residues 78 to 86 (SKRFTAQSA) lie on the Periplasmic side of the membrane. A helical membrane pass occupies residues 87-107 (EPWLQLISAVIIISTAFWMFW). Topologically, residues 108–185 (RTWRGERNWL…FDGREVTNWQ (78 aa)) are cytoplasmic. A disordered region spans residues 127-164 (HEHHHHDHEHHQDHDHDHDHEHHHHHEHGDNEEYQDAH). 2 stretches are compositionally biased toward basic and acidic residues: residues 135-146 (EHHQDHDHDHDH) and 153-164 (EHGDNEEYQDAH). A helical transmembrane segment spans residues 186-206 (ILLFGLTGGLIPCPAAITVLL). At 207-220 (ICIQLKALTLGATL) the chain is on the periplasmic side. Residues 221–241 (VVSFSIGLALTLVTVGVGAAI) form a helical membrane-spanning segment. Residues 242–262 (SVQQVAKRWSGFNTLAKRAPY) lie on the Cytoplasmic side of the membrane. The helical transmembrane segment at 263 to 283 (FSSLLIGLVGVYMGVHGFMGI) threads the bilayer. Over 284–285 (MR) the chain is Periplasmic.

The protein belongs to the NiCoT transporter (TC 2.A.52) family. RcnA subfamily.

Its subcellular location is the cell inner membrane. Efflux system for nickel and cobalt. The polypeptide is Nickel/cobalt efflux system RcnA (rcnA) (Shigella dysenteriae serotype 1 (strain Sd197)).